The chain runs to 28 residues: Apolipoprotein C-I (28 aa).

This sequence belongs to the apolipoprotein C1 family.

It is found in the secreted. Functionally, inhibitor of lipoprotein binding to the low density lipoprotein (LDL) receptor, LDL receptor-related protein, and very low density lipoprotein (VLDL) receptor. Associates with high density lipoproteins (HDL) and the triacylglycerol-rich lipoproteins in the plasma and makes up about 10% of the protein of the VLDL and 2% of that of HDL. Appears to interfere directly with fatty acid uptake and is also the major plasma inhibitor of cholesteryl ester transfer protein (CETP). Binds free fatty acids and reduces their intracellular esterification. Modulates the interaction of APOE with beta-migrating VLDL and inhibits binding of beta-VLDL to the LDL receptor-related protein. This is Apolipoprotein C-I (APOC1) from Oryctolagus cuniculus (Rabbit).